Reading from the N-terminus, the 304-residue chain is MSVAPIDFRNVEKRYGDKLVVNGLSFSVKVGECYGLLGPNGAGKTTTLKMLLGLAHPDAGTISLCGEPVPSRARHARQRVGVVPQFDNLDPDFTVRENLLVFSRYFGMSAQAARALVAPLLEFAKLENKADAKVGELSGGMKRRLTLARALVNDPDVLVLDEPTTGLDPQARHLMWERLRSLLARGKTILITTHFMEEAERLCDRLCVIEEGRKIAEGAPHALIESEIGCDVIEIYGPDPAALRDELSAFAKHTEISGETLFCYVIDPEPLTARLKGRPGLRYLHRPANLEDVFLRLTGREMQD.

An ABC transporter domain is found at 6–236 (IDFRNVEKRY…EIGCDVIEIY (231 aa)). 38-45 (GPNGAGKT) contacts ATP.

Belongs to the ABC transporter superfamily. Lipooligosaccharide exporter (TC 3.A.1.102) family. As to quaternary structure, the complex is composed of two ATP-binding proteins (NodI) and two transmembrane proteins (NodJ).

It is found in the cell inner membrane. Its function is as follows. Part of the ABC transporter complex NodIJ involved in the export of the nodulation factors (Nod factors), the bacterial signal molecules that induce symbiosis and subsequent nodulation induction. Nod factors are LCO (lipo-chitin oligosaccharide), a modified beta-1,4-linked N-acetylglucosamine oligosaccharide. This subunit is responsible for energy coupling to the transport system. The polypeptide is Nod factor export ATP-binding protein I (Burkholderia orbicola (strain AU 1054)).